We begin with the raw amino-acid sequence, 209 residues long: Thymidine kinase (209 aa).

ATP-binding positions include 16–23 (GPMFAGKT) and 90–93 (DESQ). Residue Glu-91 is the Proton acceptor of the active site.

It belongs to the thymidine kinase family. In terms of assembly, homotetramer.

The protein resides in the cytoplasm. The enzyme catalyses thymidine + ATP = dTMP + ADP + H(+). The protein is Thymidine kinase of Aster yellows witches'-broom phytoplasma (strain AYWB).